Reading from the N-terminus, the 492-residue chain is Probable cytochrome P450 313a1 (492 aa).

C438 is a binding site for heme.

Belongs to the cytochrome P450 family. Heme serves as cofactor.

The protein localises to the endoplasmic reticulum membrane. It localises to the microsome membrane. Functionally, may be involved in the metabolism of insect hormones and in the breakdown of synthetic insecticides. This is Probable cytochrome P450 313a1 (Cyp313a1) from Drosophila melanogaster (Fruit fly).